An 884-amino-acid polypeptide reads, in one-letter code: Formin-like protein 11 (884 aa).

A signal peptide spans 1-18 (MVYFRQIFLMIIVVSLHC). Positions 89 to 143 (AESASFSPWPAPSPSPFPNGGPIESPAYPPAPPRPIPPHLRRPLPQRTHPLEQPE) are disordered. 2 stretches are compositionally biased toward pro residues: residues 97–107 (WPAPSPSPFPN) and 115–126 (AYPPAPPRPIPP). The helical transmembrane segment at 158–178 (ILVPVVASTASAIGFVVCVVG) threads the bilayer. Disordered regions lie at residues 307–384 (SSDD…FSNK), 416–469 (SFPI…APLP), and 512–532 (MQSSTKNEEGKSKTPSPGKHL). A compositionally biased stretch (low complexity) spans 329 to 343 (SNASSASGSVNVGSS). Over residues 346–358 (FSEHKLDIPECSR) the composition is skewed to basic and acidic residues. Pro residues-rich tracts occupy residues 367–379 (APPPPPPPPPPLP) and 425–436 (QPRPPPPPPPPQ). Positions 461-884 (LGKDGAPLPK…NSPSPLAPFR (424 aa)) constitute an FH2 domain.

Belongs to the formin-like family. Class-I subfamily.

Its subcellular location is the membrane. Its function is as follows. Might be involved in the organization and polarity of the actin cytoskeleton. The sequence is that of Formin-like protein 11 (FH11) from Arabidopsis thaliana (Mouse-ear cress).